The primary structure comprises 240 residues: tRNA (guanine-N(7)-)-methyltransferase (240 aa).

Positions 1–10 are enriched in polar residues; that stretch reads MTESQDTPIT. The tract at residues 1–20 is disordered; it reads MTESQDTPITTDGEARPHRR. S-adenosyl-L-methionine contacts are provided by glutamate 70, glutamate 95, aspartate 122, and aspartate 145. The active site involves aspartate 145. Residues lysine 149, aspartate 181, and 218 to 221 each bind substrate; that span reads TKFE.

It belongs to the class I-like SAM-binding methyltransferase superfamily. TrmB family.

The catalysed reaction is guanosine(46) in tRNA + S-adenosyl-L-methionine = N(7)-methylguanosine(46) in tRNA + S-adenosyl-L-homocysteine. It participates in tRNA modification; N(7)-methylguanine-tRNA biosynthesis. Functionally, catalyzes the formation of N(7)-methylguanine at position 46 (m7G46) in tRNA. This chain is tRNA (guanine-N(7)-)-methyltransferase, found in Pseudomonas putida (strain W619).